A 688-amino-acid polypeptide reads, in one-letter code: Glycine--tRNA ligase beta subunit (688 aa).

The protein belongs to the class-II aminoacyl-tRNA synthetase family. Tetramer of two alpha and two beta subunits.

It is found in the cytoplasm. The catalysed reaction is tRNA(Gly) + glycine + ATP = glycyl-tRNA(Gly) + AMP + diphosphate. In Actinobacillus pleuropneumoniae serotype 7 (strain AP76), this protein is Glycine--tRNA ligase beta subunit.